Reading from the N-terminus, the 402-residue chain is Elongation factor Tu (402 aa).

One can recognise a tr-type G domain in the interval 16–211 (KEHINIGTIG…AVDSYIDSPV (196 aa)). The interval 25–32 (GHVDHGKT) is G1. 25–32 (GHVDHGKT) contacts GTP. Thr-32 is a Mg(2+) binding site. The segment at 66-70 (GITIN) is G2. The interval 87–90 (DCPG) is G3. Residues 87-91 (DCPGH) and 142-145 (NKID) contribute to the GTP site. The G4 stretch occupies residues 142–145 (NKID). A G5 region spans residues 181 to 183 (SAR).

Belongs to the TRAFAC class translation factor GTPase superfamily. Classic translation factor GTPase family. EF-Tu/EF-1A subfamily. As to quaternary structure, monomer.

The protein localises to the cytoplasm. The enzyme catalyses GTP + H2O = GDP + phosphate + H(+). Functionally, GTP hydrolase that promotes the GTP-dependent binding of aminoacyl-tRNA to the A-site of ribosomes during protein biosynthesis. The polypeptide is Elongation factor Tu (Mesomycoplasma hyopneumoniae (strain J / ATCC 25934 / NCTC 10110) (Mycoplasma hyopneumoniae)).